A 147-amino-acid polypeptide reads, in one-letter code: Diaminohydroxyphosphoribosylamino-pyrimidine deaminase (147 aa).

Residues 1-123 (MNDIFYMKRA…YLKKHGICVK (123 aa)) enclose the CMP/dCMP-type deaminase domain. Residue His-50 participates in Zn(2+) binding. Glu-52 serves as the catalytic Proton donor. Positions 75 and 84 each coordinate Zn(2+).

The protein belongs to the cytidine and deoxycytidylate deaminase family. Zn(2+) serves as cofactor.

It carries out the reaction 2,5-diamino-6-hydroxy-4-(5-phosphoribosylamino)-pyrimidine + H2O + H(+) = 5-amino-6-(5-phospho-D-ribosylamino)uracil + NH4(+). The protein operates within cofactor biosynthesis; riboflavin biosynthesis; 5-amino-6-(D-ribitylamino)uracil from GTP: step 2/4. In Buchnera aphidicola subsp. Acyrthosiphon pisum (strain APS) (Acyrthosiphon pisum symbiotic bacterium), this protein is Diaminohydroxyphosphoribosylamino-pyrimidine deaminase (ribD1).